A 1564-amino-acid polypeptide reads, in one-letter code: NACHT domain- and WD repeat-containing protein 1 (1564 aa).

In terms of domain architecture, NACHT spans threonine 335–valine 661. Glycine 341 to threonine 348 is a binding site for ATP. 14 WD repeats span residues glycine 866–methionine 905, glycine 908–threonine 947, proline 956–histidine 994, aspartate 998–lysine 1037, lysine 1044–lysine 1082, leucine 1083–methionine 1121, glutamate 1126–aspartate 1165, leucine 1167–valine 1207, leucine 1212–serine 1251, aspartate 1253–valine 1290, isoleucine 1291–isoleucine 1327, glycine 1338–cysteine 1376, lysine 1380–glutamine 1418, and glutamate 1425–valine 1462.

In terms of assembly, may interact with HSP90AA1, HSP90AB1 and BAG2. Expressed at highest levels in prostate, followed by testis, retina, trachea and optic nerve. Also detected in brain, epididymis, lung, vagina and pituitary. In the prostate, tends to be up-regulated during malignant progression compared to normal epithelium (at protein level).

It localises to the cytoplasm. It is found in the cytosol. In terms of biological role, may play a role in the control of androgen receptor (AR) protein steady-state levels. The sequence is that of NACHT domain- and WD repeat-containing protein 1 (NWD1) from Homo sapiens (Human).